The sequence spans 224 residues: Ribosomal RNA small subunit methyltransferase G (224 aa).

S-adenosyl-L-methionine contacts are provided by residues Gly89, Leu94, 140 to 141 (IE), and Arg154.

The protein belongs to the methyltransferase superfamily. RNA methyltransferase RsmG family.

It localises to the cytoplasm. The catalysed reaction is guanosine(527) in 16S rRNA + S-adenosyl-L-methionine = N(7)-methylguanosine(527) in 16S rRNA + S-adenosyl-L-homocysteine. In terms of biological role, specifically methylates the N7 position of guanine in position 527 of 16S rRNA. The sequence is that of Ribosomal RNA small subunit methyltransferase G from Bordetella avium (strain 197N).